Here is a 327-residue protein sequence, read N- to C-terminus: Biotin synthase (327 aa).

Residues 49 to 282 (FNKDKIDLCS…NKVIRLCGGR (234 aa)) form the Radical SAM core domain. [4Fe-4S] cluster is bound by residues Cys67, Cys71, and Cys74. Residues Ser110, Cys142, Cys201, and Arg277 each contribute to the [2Fe-2S] cluster site.

Belongs to the radical SAM superfamily. Biotin synthase family. Homodimer. Requires [4Fe-4S] cluster as cofactor. It depends on [2Fe-2S] cluster as a cofactor.

It catalyses the reaction (4R,5S)-dethiobiotin + (sulfur carrier)-SH + 2 reduced [2Fe-2S]-[ferredoxin] + 2 S-adenosyl-L-methionine = (sulfur carrier)-H + biotin + 2 5'-deoxyadenosine + 2 L-methionine + 2 oxidized [2Fe-2S]-[ferredoxin]. Its pathway is cofactor biosynthesis; biotin biosynthesis; biotin from 7,8-diaminononanoate: step 2/2. Its function is as follows. Catalyzes the conversion of dethiobiotin (DTB) to biotin by the insertion of a sulfur atom into dethiobiotin via a radical-based mechanism. The sequence is that of Biotin synthase from Methanococcus maripaludis (strain C5 / ATCC BAA-1333).